The sequence spans 296 residues: Inactive uridine phosphorylase B (296 aa).

It belongs to the PNP/UDP phosphorylase family. Homodimer.

The polypeptide is Inactive uridine phosphorylase B (Schistosoma mansoni (Blood fluke)).